A 316-amino-acid polypeptide reads, in one-letter code: Biotin synthase (316 aa).

One can recognise a Radical SAM core domain in the interval 36–264 (FDNRITLCAI…TATLRICGGR (229 aa)). [4Fe-4S] cluster-binding residues include cysteine 53, cysteine 57, and cysteine 60. [2Fe-2S] cluster is bound by residues cysteine 129, cysteine 189, and arginine 259.

Belongs to the radical SAM superfamily. Biotin synthase family. Homodimer. It depends on [4Fe-4S] cluster as a cofactor. Requires [2Fe-2S] cluster as cofactor.

The enzyme catalyses (4R,5S)-dethiobiotin + (sulfur carrier)-SH + 2 reduced [2Fe-2S]-[ferredoxin] + 2 S-adenosyl-L-methionine = (sulfur carrier)-H + biotin + 2 5'-deoxyadenosine + 2 L-methionine + 2 oxidized [2Fe-2S]-[ferredoxin]. Its pathway is cofactor biosynthesis; biotin biosynthesis; biotin from 7,8-diaminononanoate: step 2/2. Functionally, catalyzes the conversion of dethiobiotin (DTB) to biotin by the insertion of a sulfur atom into dethiobiotin via a radical-based mechanism. The chain is Biotin synthase from Desulfovibrio desulfuricans (strain ATCC 27774 / DSM 6949 / MB).